A 165-amino-acid chain; its full sequence is Shikimate kinase (165 aa).

11 to 16 serves as a coordination point for ATP; sequence GAGKTT. Threonine 15 provides a ligand contact to Mg(2+). Substrate-binding residues include aspartate 33, arginine 57, and glycine 78. Residue arginine 116 participates in ATP binding. Arginine 134 lines the substrate pocket.

It belongs to the shikimate kinase family. In terms of assembly, monomer. Requires Mg(2+) as cofactor.

It is found in the cytoplasm. The enzyme catalyses shikimate + ATP = 3-phosphoshikimate + ADP + H(+). It functions in the pathway metabolic intermediate biosynthesis; chorismate biosynthesis; chorismate from D-erythrose 4-phosphate and phosphoenolpyruvate: step 5/7. Functionally, catalyzes the specific phosphorylation of the 3-hydroxyl group of shikimic acid using ATP as a cosubstrate. The protein is Shikimate kinase of Bacillus cytotoxicus (strain DSM 22905 / CIP 110041 / 391-98 / NVH 391-98).